Consider the following 195-residue polypeptide: MPAVKKTNRRAQILQALAGMLETSPGQRITTAKLAEKVGVSEAALYRHFPSKARMFEGLIEFIEETLFTRINKIVNEEKDSLTRCQLILHLILGFAEKNPGITRILNGDALMGEQDRLRARIAKLFERLETQLKQVLRERKLREGKTLSADEAIIANMMICYTDGRINGFIRSGFTRKPTEQFNEQWAAFKQMFV.

An HTH tetR-type domain is found at 7 to 67 (TNRRAQILQA…GLIEFIEETL (61 aa)). Positions 30-49 (TTAKLAEKVGVSEAALYRHF) form a DNA-binding region, H-T-H motif. Positions 109–141 (DALMGEQDRLRARIAKLFERLETQLKQVLRERK) form a coiled coil.

It belongs to the nucleoid occlusion factor SlmA family. As to quaternary structure, homodimer. Interacts with FtsZ.

The protein resides in the cytoplasm. Its subcellular location is the nucleoid. Functionally, required for nucleoid occlusion (NO) phenomenon, which prevents Z-ring formation and cell division over the nucleoid. Acts as a DNA-associated cell division inhibitor that binds simultaneously chromosomal DNA and FtsZ, and disrupts the assembly of FtsZ polymers. SlmA-DNA-binding sequences (SBS) are dispersed on non-Ter regions of the chromosome, preventing FtsZ polymerization at these regions. In Alteromonas mediterranea (strain DSM 17117 / CIP 110805 / LMG 28347 / Deep ecotype), this protein is Nucleoid occlusion factor SlmA.